The primary structure comprises 311 residues: Malate dehydrogenase (311 aa).

Residues 7–13 (GAAGGIG) and Asp34 contribute to the NAD(+) site. Substrate contacts are provided by Arg81 and Arg87. Residues Asn94 and 117–119 (ITN) contribute to the NAD(+) site. The substrate site is built by Asn119 and Arg153. The active-site Proton acceptor is the His177. NAD(+) is bound at residue Met227.

This sequence belongs to the LDH/MDH superfamily. MDH type 1 family. As to quaternary structure, homodimer.

It catalyses the reaction (S)-malate + NAD(+) = oxaloacetate + NADH + H(+). Its function is as follows. Catalyzes the reversible oxidation of malate to oxaloacetate. In Vibrio atlanticus (strain LGP32) (Vibrio splendidus (strain Mel32)), this protein is Malate dehydrogenase.